The sequence spans 846 residues: Disks large-associated protein 5 (846 aa).

Ser67 is subject to Phosphoserine; by CDK1. Positions 90 to 120 form a coiled coil; it reads RKQMLQKYKEEKQLQKLKEQREKAKRGIFKV. Residues 153 to 284 form a disordered region; that stretch reads TRSKAKDQME…TNATSGMNPD (132 aa). 2 stretches are compositionally biased toward basic and acidic residues: residues 156–174 and 182–194; these read KAKD…DVRA and TSEK…EKKV. Ser202 is modified (phosphoserine). Over residues 203-225 the composition is skewed to polar residues; sequence LRMTRSATQAAKQVPRTVSSTTA. Over residues 250-266 the composition is skewed to basic and acidic residues; that stretch reads KNVETKPDKGISCKVDS. The segment covering 269-281 has biased composition (polar residues); it reads NTLNSQTNATSGM. The residue at position 326 (Thr326) is a Phosphothreonine. At Thr329 the chain carries Phosphothreonine; by CDK1. Phosphothreonine is present on Thr338. Lys347 participates in a covalent cross-link: Glycyl lysine isopeptide (Lys-Gly) (interchain with G-Cter in SUMO2). A phosphothreonine; by CDK1 mark is found at Thr401 and Thr402. Position 618 is a phosphoserine; by CDK1 (Ser618). Residue Ser627 is modified to Phosphoserine; by AURKA. A compositionally biased stretch (polar residues) spans 628–671; sequence VSSEGPSQRLGTPKSVNKAVSQSRNEMGIPQQTTSPENAGPQNT. Residues 628-674 form a disordered region; the sequence is VSSEGPSQRLGTPKSVNKAVSQSRNEMGIPQQTTSPENAGPQNTKSE. Phosphoserine occurs at positions 629 and 634. Thr639 is subject to Phosphothreonine; by CDK1. Phosphoserine; by CDK1 is present on Ser642. Residue Ser662 is modified to Phosphoserine. Residues Ser725 and Ser757 each carry the phosphoserine; by AURKA modification. A Phosphothreonine; by CDK1 modification is found at Thr759. Ser774 and Ser777 each carry phosphoserine. Thr784 is modified (phosphothreonine). Phosphoserine occurs at positions 806 and 812. Ser830 bears the Phosphoserine; by AURKA mark. Residue Ser839 is modified to Phosphoserine; by CDK1.

It belongs to the SAPAP family. Interacts with CDK1. Interacts with the C-terminal proline-rich region of FBXO7. Recruited by FBXO7 to a SCF (SKP1-CUL1-F-box) protein complex in a CDK1/Cyclin B-phosphorylation dependent manner. Interacts with CDH1. In terms of processing, ubiquitinated, leading to its degradation. Decreased phosphorylation levels are associated with the differentiation of intestinal epithelial cells. Abundantly expressed in fetal liver. Expressed at lower levels in bone marrow, testis, colon, and placenta.

The protein localises to the nucleus. The protein resides in the cytoplasm. It is found in the cytoskeleton. It localises to the spindle. Its function is as follows. Potential cell cycle regulator that may play a role in carcinogenesis of cancer cells. Mitotic phosphoprotein regulated by the ubiquitin-proteasome pathway. Key regulator of adherens junction integrity and differentiation that may be involved in CDH1-mediated adhesion and signaling in epithelial cells. The chain is Disks large-associated protein 5 (DLGAP5) from Homo sapiens (Human).